The primary structure comprises 78 residues: Serine rich endogenous peptide 19 (78 aa).

Positions 1 to 25 are cleaved as a signal peptide; the sequence is MCNIVVFLLTLTLFLFSGLSNTAFA. The SCOOP motif motif lies at 50–64; it reads KIEVDGSCSRRAPGR. The SxS motif essential for MIK2 binding signature appears at 56-58; it reads SCS. Residues 57-78 form a disordered region; the sequence is CSRRAPGRRRPPNRPPKPCTKP. Over residues 69-78 the composition is skewed to pro residues; it reads NRPPKPCTKP.

Belongs to the serine rich endogenous peptide (SCOOP) phytocytokine family. In terms of assembly, interacts with MIK2 (via extracellular leucine-rich repeat domain); this interaction triggers the formation of complex between MIK2 and the BAK1/SERK3 and SERK4 coreceptors, and subsequent BAK1 activation by phosphorylation.

It is found in the cell membrane. It localises to the secreted. Its subcellular location is the extracellular space. The protein localises to the apoplast. Its function is as follows. Brassicaceae-specific phytocytokine (plant endogenous peptide released into the apoplast) perceived by MIK2 in a BAK1/SERK3 and SERK4 coreceptors-dependent manner, that modulates various physiological and antimicrobial processes including growth prevention and reactive oxygen species (ROS) response regulation. This chain is Serine rich endogenous peptide 19, found in Arabidopsis thaliana (Mouse-ear cress).